The primary structure comprises 453 residues: Sensor histidine kinase CpxA (453 aa).

Topologically, residues 1-4 (MTAR) are cytoplasmic. Residues 5–25 (IFAIFWLTLALVLMLVLMLPK) traverse the membrane as a helical segment. Residues 26–159 (LDSRQMTELL…SDFINLLFDR (134 aa)) lie on the Periplasmic side of the membrane. Residues 160-180 (PLLLLIVTMLVSAPLLLWLAW) form a helical membrane-spanning segment. Residues 180–233 (WSLAKPARKLKNAADEVAQGNLRQHPELEAGPQEFLAAGASFNQMVTALERMMT) form the HAMP domain. Residues 181–453 (SLAKPARKLK…TIWLPLYKRT (273 aa)) lie on the Cytoplasmic side of the membrane. The 211-residue stretch at 241-451 (DISHELRTPL…RLTIWLPLYK (211 aa)) folds into the Histidine kinase domain. H244 functions as the Nucleophile in the catalytic mechanism. Position 244 is a phosphohistidine; by autocatalysis (H244). Residues 244–247 (HELR), 355–360 (RNALRY), D382, 401–402 (RT), and 412–417 (GTGLGL) each bind ATP.

Interacts with cognate response regulator CpxR.

Its subcellular location is the cell inner membrane. The catalysed reaction is ATP + protein L-histidine = ADP + protein N-phospho-L-histidine.. The two-component system is activated by envelope stress such as overexpression of some (misfolded) periplasmic proteins. Functionally, histidine kinase member of the two-component regulatory system CpxA/CpxR which responds to envelope stress response by activating or, in some cases, repressing expression of downstream genes. Activates CpxR by phosphorylation. The sequence is that of Sensor histidine kinase CpxA from Klebsiella pneumoniae subsp. pneumoniae (strain HS11286).